A 72-amino-acid polypeptide reads, in one-letter code: Long neurotoxin OH-17 (72 aa).

Disulfide bonds link cysteine 3/cysteine 21, cysteine 14/cysteine 42, cysteine 27/cysteine 31, cysteine 46/cysteine 57, and cysteine 58/cysteine 63.

This sequence belongs to the three-finger toxin family. Long-chain subfamily. Type II alpha-neurotoxin sub-subfamily. As to expression, expressed by the venom gland.

The protein localises to the secreted. Binds with high affinity to muscular (alpha-1/CHRNA1) and neuronal (alpha-7/CHRNA7) nicotinic acetylcholine receptor (nAChR) and inhibits acetylcholine from binding to the receptor, thereby impairing neuromuscular and neuronal transmission. The chain is Long neurotoxin OH-17 from Ophiophagus hannah (King cobra).